The primary structure comprises 259 residues: UBX domain-containing protein 2A (259 aa).

Positions 1–151 (MKDVDNLKSI…SATPKIVSKA (151 aa)) are required for interaction with CHRNA3. The interval 1-164 (MKDVDNLKSI…EVENKNNLSA (164 aa)) is required for inhibition of CHRNA3 ubiquitination and translocation of CHRNA3 to the plasma membrane resulting in an increase in acetylcholine-gated nicotinic acetylcholine receptor currents. Positions 60 to 124 (QVDVNIKLWK…VEDKKNEICL (65 aa)) constitute an SEP domain. The tract at residues 167–259 (LNNLEPITNI…TASFRELSEH (93 aa)) is required for interaction with VCP. Residues 169–246 (NLEPITNIQI…DLQNAVIIQR (78 aa)) enclose the UBX domain.

As to quaternary structure, part of a complex composed of STUB1/CHIP, VCP/p97, CHRNA3, and UBXN2A that modulates the ubiquitination and endoplasmic reticulum-associated degradation (ERAD) of CHRNA3. Within the complex UBXN2A acts as a scaffold protein required for the interaction of CHRNA3 with VCP/p97, this interaction also inhibits CHRNA3 ubiquitination by STUB1/CHIP and subsequently ERAD. Interacts (via SEP domain) with CHRNA3 and interacts (via UBX domain) with VCP/P97; these interactions are required for the interaction of CHRNA3 with the STUB1-VCP-UBXN2A complex. Interacts with HSPA9/MOT-2 (via SBD domain); the interaction inhibits HSPA9/MOT-2 interaction with and degradation of p53, thereby promotes p53 translocation to the nucleus. Interacts with RICTOR. Ubiquitinated. As to expression, expressed in the colon (at protein level).

The protein localises to the golgi apparatus. It is found in the endoplasmic reticulum. Its subcellular location is the perikaryon. It localises to the cell projection. The protein resides in the dendrite. The protein localises to the nucleus. It is found in the cytoplasm. Acts to repress the ubiquitination and subsequent endoplasmic reticulum-associated degradation of CHRNA3 by the STUB1-VCP-UBXN2A complex in cortical neurons. Also acts to promote the translocation of CHRNA3 to the plasma membrane and subsequently increases plasma membrane acetylcholine-gated ion-channel activation. Plays a role in the inhibition of STUB1-mediated TP53 degradation, via its interaction with HSPA9 which acts to inhibit TP53 binding to HSPA9. Positively mediates the ubiquitination and proteosomal degradation of RICTOR, may thereby act as a negative regulator of the mTORC2 pathway. The sequence is that of UBX domain-containing protein 2A from Homo sapiens (Human).